We begin with the raw amino-acid sequence, 37 residues long: Large ribosomal subunit protein bL36 (37 aa).

Belongs to the bacterial ribosomal protein bL36 family.

The protein is Large ribosomal subunit protein bL36 of Marinobacter nauticus (strain ATCC 700491 / DSM 11845 / VT8) (Marinobacter aquaeolei).